A 462-amino-acid chain; its full sequence is tRNA modification GTPase MnmE (462 aa).

(6S)-5-formyl-5,6,7,8-tetrahydrofolate contacts are provided by arginine 27, glutamate 89, and arginine 128. The 160-residue stretch at 224-383 (GLATAIVGRP…LDERIAKLFF (160 aa)) folds into the TrmE-type G domain. Asparagine 234 is a K(+) binding site. Residues 234-239 (NVGKSS), 253-259 (TDVAGTT), and 278-281 (DTAG) each bind GTP. Serine 238 is a binding site for Mg(2+). Threonine 253, valine 255, and threonine 258 together coordinate K(+). Threonine 259 contributes to the Mg(2+) binding site. Lysine 462 provides a ligand contact to (6S)-5-formyl-5,6,7,8-tetrahydrofolate.

It belongs to the TRAFAC class TrmE-Era-EngA-EngB-Septin-like GTPase superfamily. TrmE GTPase family. As to quaternary structure, homodimer. Heterotetramer of two MnmE and two MnmG subunits. The cofactor is K(+).

Its subcellular location is the cytoplasm. In terms of biological role, exhibits a very high intrinsic GTPase hydrolysis rate. Involved in the addition of a carboxymethylaminomethyl (cmnm) group at the wobble position (U34) of certain tRNAs, forming tRNA-cmnm(5)s(2)U34. The polypeptide is tRNA modification GTPase MnmE (Lacticaseibacillus paracasei (strain ATCC 334 / BCRC 17002 / CCUG 31169 / CIP 107868 / KCTC 3260 / NRRL B-441) (Lactobacillus paracasei)).